A 900-amino-acid polypeptide reads, in one-letter code: Alanine--tRNA ligase (900 aa).

Positions 580, 584, 683, and 687 each coordinate Zn(2+).

The protein belongs to the class-II aminoacyl-tRNA synthetase family. The cofactor is Zn(2+).

The protein localises to the cytoplasm. It carries out the reaction tRNA(Ala) + L-alanine + ATP = L-alanyl-tRNA(Ala) + AMP + diphosphate. Functionally, catalyzes the attachment of alanine to tRNA(Ala) in a two-step reaction: alanine is first activated by ATP to form Ala-AMP and then transferred to the acceptor end of tRNA(Ala). Also edits incorrectly charged Ser-tRNA(Ala) and Gly-tRNA(Ala) via its editing domain. In Mycolicibacterium paratuberculosis (strain ATCC BAA-968 / K-10) (Mycobacterium paratuberculosis), this protein is Alanine--tRNA ligase.